A 206-amino-acid chain; its full sequence is Guanylate kinase (206 aa).

The 179-residue stretch at 6–184 folds into the Guanylate kinase-like domain; the sequence is GTLYIISAPS…ALGDLKAIFR (179 aa). An ATP-binding site is contributed by 13–20; it reads APSGAGKS.

This sequence belongs to the guanylate kinase family.

The protein resides in the cytoplasm. The enzyme catalyses GMP + ATP = GDP + ADP. Its function is as follows. Essential for recycling GMP and indirectly, cGMP. This is Guanylate kinase from Pseudomonas fluorescens (strain ATCC BAA-477 / NRRL B-23932 / Pf-5).